The primary structure comprises 42 residues: Photosystem II reaction center protein J (42 aa).

A helical membrane pass occupies residues 10–30 (IPLWLVGTVVGTLALGLVALF).

It belongs to the PsbJ family. As to quaternary structure, PSII is composed of 1 copy each of membrane proteins PsbA, PsbB, PsbC, PsbD, PsbE, PsbF, PsbH, PsbI, PsbJ, PsbK, PsbL, PsbM, PsbT, PsbX, PsbY, PsbZ, Psb30/Ycf12, at least 3 peripheral proteins of the oxygen-evolving complex and a large number of cofactors. It forms dimeric complexes.

The protein localises to the plastid. It is found in the chloroplast thylakoid membrane. One of the components of the core complex of photosystem II (PSII). PSII is a light-driven water:plastoquinone oxidoreductase that uses light energy to abstract electrons from H(2)O, generating O(2) and a proton gradient subsequently used for ATP formation. It consists of a core antenna complex that captures photons, and an electron transfer chain that converts photonic excitation into a charge separation. The protein is Photosystem II reaction center protein J of Oltmannsiellopsis viridis (Marine flagellate).